The following is a 151-amino-acid chain: Nucleoside diphosphate kinase (151 aa).

6 residues coordinate ATP: lysine 11, phenylalanine 59, arginine 87, threonine 93, arginine 104, and asparagine 114. Histidine 117 (pros-phosphohistidine intermediate) is an active-site residue.

Belongs to the NDK family. It depends on Mg(2+) as a cofactor.

It carries out the reaction a 2'-deoxyribonucleoside 5'-diphosphate + ATP = a 2'-deoxyribonucleoside 5'-triphosphate + ADP. It catalyses the reaction a ribonucleoside 5'-diphosphate + ATP = a ribonucleoside 5'-triphosphate + ADP. Functionally, major role in the synthesis of nucleoside triphosphates other than ATP. The ATP gamma phosphate is transferred to the NDP beta phosphate via a ping-pong mechanism, using a phosphorylated active-site intermediate. The protein is Nucleoside diphosphate kinase (NDK1) of Eremothecium gossypii (strain ATCC 10895 / CBS 109.51 / FGSC 9923 / NRRL Y-1056) (Yeast).